A 270-amino-acid chain; its full sequence is Formamidopyrimidine-DNA glycosylase (270 aa).

Pro2 functions as the Schiff-base intermediate with DNA in the catalytic mechanism. Residue Glu3 is the Proton donor of the active site. The active-site Proton donor; for beta-elimination activity is the Lys57. Residues His90, Arg109, and Lys150 each contribute to the DNA site. The FPG-type zinc-finger motif lies at 235-269 (LVYGNKDKPCPRCGTKIKSIIIGQRNSFFCPQCQK). Residue Arg259 is the Proton donor; for delta-elimination activity of the active site.

The protein belongs to the FPG family. In terms of assembly, monomer. Zn(2+) serves as cofactor.

The catalysed reaction is Hydrolysis of DNA containing ring-opened 7-methylguanine residues, releasing 2,6-diamino-4-hydroxy-5-(N-methyl)formamidopyrimidine.. The enzyme catalyses 2'-deoxyribonucleotide-(2'-deoxyribose 5'-phosphate)-2'-deoxyribonucleotide-DNA = a 3'-end 2'-deoxyribonucleotide-(2,3-dehydro-2,3-deoxyribose 5'-phosphate)-DNA + a 5'-end 5'-phospho-2'-deoxyribonucleoside-DNA + H(+). Its function is as follows. Involved in base excision repair of DNA damaged by oxidation or by mutagenic agents. Acts as a DNA glycosylase that recognizes and removes damaged bases. Has a preference for oxidized purines, such as 7,8-dihydro-8-oxoguanine (8-oxoG). Has AP (apurinic/apyrimidinic) lyase activity and introduces nicks in the DNA strand. Cleaves the DNA backbone by beta-delta elimination to generate a single-strand break at the site of the removed base with both 3'- and 5'-phosphates. In Histophilus somni (strain 2336) (Haemophilus somnus), this protein is Formamidopyrimidine-DNA glycosylase.